A 183-amino-acid polypeptide reads, in one-letter code: Shikimate kinase (183 aa).

18 to 23 lines the ATP pocket; sequence GVGKTT. T22 contributes to the Mg(2+) binding site. Substrate contacts are provided by D40, R64, and G86. R125 serves as a coordination point for ATP. Residue R143 participates in substrate binding.

This sequence belongs to the shikimate kinase family. As to quaternary structure, monomer. It depends on Mg(2+) as a cofactor.

Its subcellular location is the cytoplasm. The enzyme catalyses shikimate + ATP = 3-phosphoshikimate + ADP + H(+). It participates in metabolic intermediate biosynthesis; chorismate biosynthesis; chorismate from D-erythrose 4-phosphate and phosphoenolpyruvate: step 5/7. In terms of biological role, catalyzes the specific phosphorylation of the 3-hydroxyl group of shikimic acid using ATP as a cosubstrate. This is Shikimate kinase from Oceanobacillus iheyensis (strain DSM 14371 / CIP 107618 / JCM 11309 / KCTC 3954 / HTE831).